Reading from the N-terminus, the 137-residue chain is MMVKQEIVQTGRAQELRCQGYDALKRTSYEFTKHAQPLPNGGFLLCNLEACSYSIQGCGFSPTFALESSEGSVDWRETLILSPKPKLFFLLCREGGPAVHLLSVSSYGDRCKSGEARLRTWHLSCSRCGVALLPSGA.

The sequence is that of Putative FERT-1 protein (FERT-1) from Ascaris suum (Pig roundworm).